Reading from the N-terminus, the 332-residue chain is L-lactate dehydrogenase A chain (332 aa).

A2 is subject to N-acetylalanine. K5 bears the N6-acetyllysine; alternate mark. K5 bears the N6-succinyllysine; alternate mark. K14 is modified (N6-acetyllysine). T18 is subject to Phosphothreonine. Position 29–57 (29–57 (GAVGMACAISILMKDLADELALVDVIEDK)) interacts with NAD(+). K57 bears the N6-acetyllysine; alternate mark. Residue K57 forms a Glycyl lysine isopeptide (Lys-Gly) (interchain with G-Cter in SUMO2); alternate linkage. At K81 the chain carries N6-acetyllysine. R99 contacts NAD(+). A substrate-binding site is contributed by R106. N6-acetyllysine; alternate is present on K118. N6-succinyllysine; alternate is present on K118. K126 is modified (N6-acetyllysine). Residue N138 coordinates NAD(+). 2 residues coordinate substrate: N138 and R169. The active-site Proton acceptor is H193. N6-acetyllysine occurs at positions 224 and 232. Phosphotyrosine is present on Y239. The residue at position 243 (K243) is an N6-acetyllysine. A substrate-binding site is contributed by T248. The residue at position 309 (T309) is a Phosphothreonine. K318 is modified (N6-acetyllysine; alternate). K318 carries the N6-succinyllysine; alternate modification. Phosphothreonine is present on T322.

Belongs to the LDH/MDH superfamily. LDH family. As to quaternary structure, homotetramer. Interacts with PTEN upstream reading frame protein MP31. ISGylated.

Its subcellular location is the cytoplasm. It catalyses the reaction (S)-lactate + NAD(+) = pyruvate + NADH + H(+). The protein operates within fermentation; pyruvate fermentation to lactate; (S)-lactate from pyruvate: step 1/1. In terms of biological role, interconverts simultaneously and stereospecifically pyruvate and lactate with concomitant interconversion of NADH and NAD(+). The sequence is that of L-lactate dehydrogenase A chain (LDHA) from Macaca fascicularis (Crab-eating macaque).